Reading from the N-terminus, the 454-residue chain is DNA-binding protein (454 aa).

Residues Met1–His41 form a disordered region. Tyr129 carries the post-translational modification Phosphotyrosine; by host. 2 residues coordinate Zn(2+): Cys213 and His215. The interval Val226–Phe260 is flexible loop. The Zn(2+) site is built by Cys268, Cys284, Cys325, Cys327, Cys378, and Cys394. The segment at Thr440–Phe454 is C-terminal arm, DBP binding.

It belongs to the adenoviridae E2A DNA-binding protein family. As to quaternary structure, homomultimerizes on viral ssDNA bound to pTP. Forms a initiation complex with viral polymerase, pTP and hosts NFIA and POU2F1/OCT1. Interacts with host SRCAP.

It is found in the host nucleus. Its function is as follows. Plays a role in the elongation phase of viral strand displacement replication by unwinding the template in an ATP-independent fashion, employing its capacity to form multimers. Also enhances the rate of initiation. Released from template upon second strand synthesis. Assembles in complex with viral pTP, viral pol, host NFIA and host POU2F1/OCT1 on viral origin of replication. Covers the whole ssDNA genome during synthesis. The complementary strand synthesis induces its relese from DNA template. May inhibit cellular transcription mediated by the interaction between host SRCAP and CBP. In Canine adenovirus serotype 1 (strain RI261) (CAdV-1), this protein is DNA-binding protein.